Here is a 403-residue protein sequence, read N- to C-terminus: GTPase Obg (403 aa).

One can recognise an Obg domain in the interval 1 to 159 (MKFIDESLIR…RDLLLELMLL (159 aa)). The OBG-type G domain maps to 160-333 (ADVGMLGFPN…LCRDIMDFII (174 aa)). Residues 166–173 (GFPNAGKS), 191–195 (FTTLV), 213–216 (DIPG), 283–286 (NKID), and 314–316 (SAA) contribute to the GTP site. S173 and T193 together coordinate Mg(2+). Residues 364–403 (YQFDDDEDWDDDWTEEDDDEDWDDDWSEEDDEGIEFIYKP) are disordered. The span at 365-397 (QFDDDEDWDDDWTEEDDDEDWDDDWSEEDDEGI) shows a compositional bias: acidic residues.

This sequence belongs to the TRAFAC class OBG-HflX-like GTPase superfamily. OBG GTPase family. Monomer. Requires Mg(2+) as cofactor.

The protein localises to the cytoplasm. Functionally, an essential GTPase which binds GTP, GDP and possibly (p)ppGpp with moderate affinity, with high nucleotide exchange rates and a fairly low GTP hydrolysis rate. Plays a role in control of the cell cycle, stress response, ribosome biogenesis and in those bacteria that undergo differentiation, in morphogenesis control. This chain is GTPase Obg, found in Haemophilus influenzae (strain PittGG).